Here is a 395-residue protein sequence, read N- to C-terminus: Acetylornithine aminotransferase (395 aa).

Pyridoxal 5'-phosphate contacts are provided by residues 117–118 (GA) and Phe144. Arg147 serves as a coordination point for N(2)-acetyl-L-ornithine. 230–233 (DEVQ) serves as a coordination point for pyridoxal 5'-phosphate. At Lys259 the chain carries N6-(pyridoxal phosphate)lysine. Ser285 provides a ligand contact to N(2)-acetyl-L-ornithine. Residue Thr286 coordinates pyridoxal 5'-phosphate.

It belongs to the class-III pyridoxal-phosphate-dependent aminotransferase family. ArgD subfamily. In terms of assembly, homodimer. Pyridoxal 5'-phosphate is required as a cofactor.

Its subcellular location is the cytoplasm. The enzyme catalyses N(2)-acetyl-L-ornithine + 2-oxoglutarate = N-acetyl-L-glutamate 5-semialdehyde + L-glutamate. The protein operates within amino-acid biosynthesis; L-arginine biosynthesis; N(2)-acetyl-L-ornithine from L-glutamate: step 4/4. This Methanosarcina acetivorans (strain ATCC 35395 / DSM 2834 / JCM 12185 / C2A) protein is Acetylornithine aminotransferase.